A 515-amino-acid chain; its full sequence is Cytochrome P450 monooxygenase paxP (515 aa).

A helical transmembrane segment spans residues 20 to 36 (SLLWKLGVFAVLVYFLL). Residue Cys-456 participates in heme binding.

Belongs to the cytochrome P450 family. Requires heme as cofactor.

The protein resides in the membrane. It participates in secondary metabolite biosynthesis. In terms of biological role, cytochrome P450 monooxygenase; part of the ATM2 gene cluster that mediates the biosynthesis of paxilline, a mycotoxin that acts as an inhibitor of mammalian maxi-K channels. PaxG, the geranylgeranyl diphosphate (GGPP) synthase is proposed to catalyze the first step in paxilline biosynthesis. Condensation of indole-3-glycerol phosphate with GGPP by paxC then forms 3-geranylgeranylindole (3-GGI), followed by epoxidation and cyclization of this intermediate (by paxM and paxB) to form paspaline. Paspaline is subsequently converted to 13-desoxypaxilline by paxP, the latter being then converted to paxilline by paxQ. Finally paxilline can be mono- and di-prenylated by paxD. PaxP can also utilized beta-paxitriol and alpha-PC-M6 as substrates converting them to paxilline. This Penicillium paxilli protein is Cytochrome P450 monooxygenase paxP.